The chain runs to 319 residues: Probable cell division protein WhiA (319 aa).

The segment at residues 278–311 (SLKELGQMLNPPVGKSGVNHRLRRLESLAEAFSR) is a DNA-binding region (H-T-H motif).

It belongs to the WhiA family.

Functionally, involved in cell division and chromosome segregation. This Heliobacterium modesticaldum (strain ATCC 51547 / Ice1) protein is Probable cell division protein WhiA.